A 451-amino-acid chain; its full sequence is CCAAT/enhancer-binding protein (451 aa).

Disordered stretches follow at residues 210-236, 267-298, and 328-389; these read TYNN…EPID, QSNN…NSTN, and LKHH…AKVR. 3 stretches are compositionally biased toward low complexity: residues 218 to 228, 268 to 298, and 334 to 350; these read ENSSVGSDSSS, SNNL…NSTN, and LQQT…QHAQ. Residues 359–370 are compositionally biased toward basic and acidic residues; that stretch reads KHVDKGTEEYRR. Residues 365–428 enclose the bZIP domain; sequence TEEYRRRRER…SLHKQIYMQL (64 aa). The segment at 369 to 398 is basic motif; that stretch reads RRRRERNNIAVRKSREKAKVRSKEVEERVK. The interval 400–407 is leucine-zipper; sequence LLKEKDAL.

This sequence belongs to the bZIP family. C/EBP subfamily. In terms of assembly, binds DNA as a dimer and can form stable heterodimers.

It is found in the nucleus. Its function is as follows. May be required for the expression of gene products mediating border cell migration. Among the DNA sequences that this protein binds with high affinity is a conserved site within the promoter of its gene. The sequence is that of CCAAT/enhancer-binding protein (slbo) from Drosophila virilis (Fruit fly).